The sequence spans 189 residues: uncharacterized protein (189 aa).

Residues 31–54 (KCENIDDLANRYEVSKQEVEKVFK) adopt a coiled-coil conformation. EF-hand domains are found at residues 47–82 (QEVEKVFKIFQLMDDDGSGTISSSEVAKMLNELGID), 83–118 (VSPKVVQAVMRSSDVSGDGQIDFEEFLAAVTSKIKL), 120–155 (TVKADVQLMLSKIDNNPEKVISAEELVVAWSETVST), and 157–189 (ITVKEACALIQQADTQGRGKATIHEFITMCQTV). Ca(2+)-binding residues include aspartate 60, aspartate 62, serine 64, threonine 66, glutamate 71, aspartate 96, serine 98, aspartate 100, glutamine 102, glutamate 107, aspartate 133, asparagine 135, glutamate 137, and glutamate 144.

This is an uncharacterized protein from Caenorhabditis elegans.